Consider the following 641-residue polypeptide: Tetracycline resistance protein TetQ (641 aa).

Residues 1–244 form the tr-type G domain; the sequence is MNIINLGILA…AITSFILPPA (244 aa). Residues 10-17, 74-78, and 128-131 each bind GTP; these read AHIDAGKT, DTPGH, and NKID.

Belongs to the TRAFAC class translation factor GTPase superfamily. Classic translation factor GTPase family. TetM/TetO subfamily.

Abolishes the inhibitory effect of tetracyclin on protein synthesis by a non-covalent modification of the ribosomes. This chain is Tetracycline resistance protein TetQ (tetQ), found in Xylanibacter ruminicola (Prevotella ruminicola).